Reading from the N-terminus, the 415-residue chain is Probable N-acetyl-gamma-glutamyl-phosphate reductase, chloroplastic (415 aa).

The N-terminal 74 residues, Met-1–Arg-74, are a transit peptide targeting the chloroplast. The interval Val-48–Lys-68 is disordered. A compositionally biased stretch (polar residues) spans Pro-56–Val-67. Residue Cys-219 is part of the active site.

The protein belongs to the NAGSA dehydrogenase family. Type 1 subfamily. As to quaternary structure, homotetramer.

It is found in the plastid. The protein resides in the chloroplast. It carries out the reaction N-acetyl-L-glutamate 5-semialdehyde + phosphate + NADP(+) = N-acetyl-L-glutamyl 5-phosphate + NADPH + H(+). Its pathway is amino-acid biosynthesis; L-arginine biosynthesis; N(2)-acetyl-L-ornithine from L-glutamate: step 3/4. The polypeptide is Probable N-acetyl-gamma-glutamyl-phosphate reductase, chloroplastic (Oryza sativa subsp. japonica (Rice)).